Here is a 269-residue protein sequence, read N- to C-terminus: HTH-type transcriptional activator ArnR (269 aa).

At 1 to 218 (MTKSLFDVLK…LLRLTNSYTL (218 aa)) the chain is on the cytoplasmic side. Residues 39-62 (TTEISQTINTSRKSIIDAIRKLVD) constitute a DNA-binding region (H-T-H motif). Residues 219-239 (EMANVKVMGFILISLPLLMYF) form a helical membrane-spanning segment. Residues 240-242 (RDQ) lie on the Extracellular side of the membrane. The chain crosses the membrane as a helical span at residues 243-263 (LGLIELPWLYAVIFLALLSVF). Topologically, residues 264–269 (AQILSR) are cytoplasmic.

The protein localises to the cell membrane. Its function is as follows. Involved in regulation of archaellar gene expression. Activates flaB transcription upon nutrient starvation by acting on the flaB promoter. The polypeptide is HTH-type transcriptional activator ArnR (Sulfolobus acidocaldarius (strain ATCC 33909 / DSM 639 / JCM 8929 / NBRC 15157 / NCIMB 11770)).